A 361-amino-acid chain; its full sequence is MERITVTLGERSYPITIAAGLFDDPASFMPLKAGDQAMLVTNQTLAPLYLDCVRGVLENHGVHVDQVILPDGEQYKSLTVLDQVFTALLAKPHGRDTTIVALGGGVIGDLAGFAAASYQRGVRFLQVPTTLLSQVDSSVGGKTAVNHPLGKNMIGAFYQPVSVVIDLDCLKSLPARELSSGLAEVIKYGIILDRDFFLWLEENIEAVRELQHDALAYCIRRCCEIKAAVVAADERENSMRALLNLGHTYGHAIEAEMGYGNWLHGEAVAAGMVMAAHTARRLGQFSDSDVERVKSLLVRAGLPVNGPTQMTPESYLPHMMRDKKVLAGELRLVLPTAIGQSEVRGGVAHDMVLASIADCLA.

NAD(+)-binding positions include 71–76 (DGEQYK), 105–109 (GVIGD), 129–130 (TT), K142, and K151. Residues E184, H247, and H264 each coordinate Zn(2+).

This sequence belongs to the sugar phosphate cyclases superfamily. Dehydroquinate synthase family. The cofactor is Co(2+). It depends on Zn(2+) as a cofactor. Requires NAD(+) as cofactor.

It is found in the cytoplasm. It catalyses the reaction 7-phospho-2-dehydro-3-deoxy-D-arabino-heptonate = 3-dehydroquinate + phosphate. It functions in the pathway metabolic intermediate biosynthesis; chorismate biosynthesis; chorismate from D-erythrose 4-phosphate and phosphoenolpyruvate: step 2/7. In terms of biological role, catalyzes the conversion of 3-deoxy-D-arabino-heptulosonate 7-phosphate (DAHP) to dehydroquinate (DHQ). This chain is 3-dehydroquinate synthase, found in Pectobacterium atrosepticum (strain SCRI 1043 / ATCC BAA-672) (Erwinia carotovora subsp. atroseptica).